The following is a 301-amino-acid chain: tRNA dimethylallyltransferase (301 aa).

5-12 (GPTASGKS) is an ATP binding site. 7–12 (TASGKS) serves as a coordination point for substrate. The tract at residues 30–33 (DSMQ) is interaction with substrate tRNA.

The protein belongs to the IPP transferase family. As to quaternary structure, monomer. Mg(2+) is required as a cofactor.

The catalysed reaction is adenosine(37) in tRNA + dimethylallyl diphosphate = N(6)-dimethylallyladenosine(37) in tRNA + diphosphate. In terms of biological role, catalyzes the transfer of a dimethylallyl group onto the adenine at position 37 in tRNAs that read codons beginning with uridine, leading to the formation of N6-(dimethylallyl)adenosine (i(6)A). The chain is tRNA dimethylallyltransferase from Rhodopseudomonas palustris (strain TIE-1).